A 323-amino-acid chain; its full sequence is Acetyl-coenzyme A carboxylase carboxyl transferase subunit alpha (323 aa).

A CoA carboxyltransferase C-terminal domain is found at 32–293 (NISEEVAKLQ…RKALAAQLES (262 aa)).

Belongs to the AccA family. As to quaternary structure, acetyl-CoA carboxylase is a heterohexamer composed of biotin carboxyl carrier protein (AccB), biotin carboxylase (AccC) and two subunits each of ACCase subunit alpha (AccA) and ACCase subunit beta (AccD).

It is found in the cytoplasm. It catalyses the reaction N(6)-carboxybiotinyl-L-lysyl-[protein] + acetyl-CoA = N(6)-biotinyl-L-lysyl-[protein] + malonyl-CoA. Its pathway is lipid metabolism; malonyl-CoA biosynthesis; malonyl-CoA from acetyl-CoA: step 1/1. Component of the acetyl coenzyme A carboxylase (ACC) complex. First, biotin carboxylase catalyzes the carboxylation of biotin on its carrier protein (BCCP) and then the CO(2) group is transferred by the carboxyltransferase to acetyl-CoA to form malonyl-CoA. The polypeptide is Acetyl-coenzyme A carboxylase carboxyl transferase subunit alpha (Alcanivorax borkumensis (strain ATCC 700651 / DSM 11573 / NCIMB 13689 / SK2)).